A 409-amino-acid polypeptide reads, in one-letter code: SPI-1 type 3 secretion system translocon protein SctB (409 aa).

The chain crosses the membrane as a helical span at residues 119-140; that stretch reads ISGMSSSAVALLAAANTLMLTL.

This sequence belongs to the SctB/SipC family. As to quaternary structure, the core secretion machinery of the T3SS is composed of approximately 20 different proteins, including cytoplasmic components, a base, an export apparatus and a needle. This subunit is involved in the formation of a pore, called the translocon, in host membrane.

It is found in the secreted. The protein localises to the host membrane. Functionally, component of the type III secretion system 1 (SPI-1 T3SS), also called injectisome, which is used to inject bacterial effector proteins into eukaryotic host cells. SipB/SctE1 and SipC/SctB1 are inserted into the host membrane where they form a pore and allow the translocation of effector proteins into the cytosol of target cells. This chain is SPI-1 type 3 secretion system translocon protein SctB, found in Salmonella typhimurium (strain 14028s / SGSC 2262).